The chain runs to 465 residues: Methylenetetrahydrofolate--tRNA-(uracil-5-)-methyltransferase TrmFO (465 aa).

An FAD-binding site is contributed by 11–16; sequence GGGLAG.

Belongs to the MnmG family. TrmFO subfamily. It depends on FAD as a cofactor.

It is found in the cytoplasm. The enzyme catalyses uridine(54) in tRNA + (6R)-5,10-methylene-5,6,7,8-tetrahydrofolate + NADH + H(+) = 5-methyluridine(54) in tRNA + (6S)-5,6,7,8-tetrahydrofolate + NAD(+). The catalysed reaction is uridine(54) in tRNA + (6R)-5,10-methylene-5,6,7,8-tetrahydrofolate + NADPH + H(+) = 5-methyluridine(54) in tRNA + (6S)-5,6,7,8-tetrahydrofolate + NADP(+). Catalyzes the folate-dependent formation of 5-methyl-uridine at position 54 (M-5-U54) in all tRNAs. This Acaryochloris marina (strain MBIC 11017) protein is Methylenetetrahydrofolate--tRNA-(uracil-5-)-methyltransferase TrmFO.